The primary structure comprises 270 residues: Formamidopyrimidine-DNA glycosylase (270 aa).

Pro-2 (schiff-base intermediate with DNA) is an active-site residue. Glu-3 acts as the Proton donor in catalysis. Lys-58 (proton donor; for beta-elimination activity) is an active-site residue. His-91, Arg-110, and Arg-151 together coordinate DNA. An FPG-type zinc finger spans residues 236–270; that stretch reads FVYGRGGENCKVCGTGLREIKLGQRASVYCPRCQS. The active-site Proton donor; for delta-elimination activity is the Arg-260.

Belongs to the FPG family. Monomer. Zn(2+) serves as cofactor.

It catalyses the reaction Hydrolysis of DNA containing ring-opened 7-methylguanine residues, releasing 2,6-diamino-4-hydroxy-5-(N-methyl)formamidopyrimidine.. The catalysed reaction is 2'-deoxyribonucleotide-(2'-deoxyribose 5'-phosphate)-2'-deoxyribonucleotide-DNA = a 3'-end 2'-deoxyribonucleotide-(2,3-dehydro-2,3-deoxyribose 5'-phosphate)-DNA + a 5'-end 5'-phospho-2'-deoxyribonucleoside-DNA + H(+). Involved in base excision repair of DNA damaged by oxidation or by mutagenic agents. Acts as a DNA glycosylase that recognizes and removes damaged bases. Has a preference for oxidized purines, such as 7,8-dihydro-8-oxoguanine (8-oxoG). Has AP (apurinic/apyrimidinic) lyase activity and introduces nicks in the DNA strand. Cleaves the DNA backbone by beta-delta elimination to generate a single-strand break at the site of the removed base with both 3'- and 5'-phosphates. The sequence is that of Formamidopyrimidine-DNA glycosylase from Pseudomonas fluorescens (strain ATCC BAA-477 / NRRL B-23932 / Pf-5).